The following is a 435-amino-acid chain: Gamma-glutamyl phosphate reductase (435 aa).

It belongs to the gamma-glutamyl phosphate reductase family.

It localises to the cytoplasm. The catalysed reaction is L-glutamate 5-semialdehyde + phosphate + NADP(+) = L-glutamyl 5-phosphate + NADPH + H(+). The protein operates within amino-acid biosynthesis; L-proline biosynthesis; L-glutamate 5-semialdehyde from L-glutamate: step 2/2. Its function is as follows. Catalyzes the NADPH-dependent reduction of L-glutamate 5-phosphate into L-glutamate 5-semialdehyde and phosphate. The product spontaneously undergoes cyclization to form 1-pyrroline-5-carboxylate. In Synechococcus sp. (strain WH7803), this protein is Gamma-glutamyl phosphate reductase.